A 558-amino-acid polypeptide reads, in one-letter code: ATP synthase subunit alpha (558 aa).

172–179 (GDRKTGKT) contributes to the ATP binding site. Residues 536–558 (ESVKVHQAIPAKTSEKSKNSTPR) form a disordered region. Residues 548-558 (TSEKSKNSTPR) show a composition bias toward basic and acidic residues.

The protein belongs to the ATPase alpha/beta chains family. F-type ATPases have 2 components, CF(1) - the catalytic core - and CF(0) - the membrane proton channel. CF(1) has five subunits: alpha(3), beta(3), gamma(1), delta(1), epsilon(1). CF(0) has three main subunits: a(1), b(2) and c(9-12). The alpha and beta chains form an alternating ring which encloses part of the gamma chain. CF(1) is attached to CF(0) by a central stalk formed by the gamma and epsilon chains, while a peripheral stalk is formed by the delta and b chains.

Its subcellular location is the cell membrane. It carries out the reaction ATP + H2O + 4 H(+)(in) = ADP + phosphate + 5 H(+)(out). Produces ATP from ADP in the presence of a proton gradient across the membrane. The alpha chain is a regulatory subunit. The protein is ATP synthase subunit alpha of Mycobacterium leprae (strain Br4923).